Here is a 349-residue protein sequence, read N- to C-terminus: MADDRKAALDAALKKIEKSYGKGSIMKLGEKIDQQISTIPSGSLALDVALGVGGYPRGRIIEVYGPESSGKTTVALHAIAEVQKNGGTAAFIDAEHALDPQYAQKLGVNIDELLLSQPDTGEQGLEIADALVSSGAVDIVVVDSVAALVPRAEIDGEMGDSHVGLQARLMSQALRKLSGSINKTKTIAIFINQIREKVGVMFGNPEITPGGRALKFYATIRLEVRRAEQLKQGTDIVGNRTKIKVVKNKVAPPFKIAEVDVMYGLGISQEGELLDMAVEKDIVDKSGAWYSYKEDRIGQGRENAKIYMANHPEMMAEVSALVRAAYGIGEEVAVPEDEKGQEELPLVEE.

Position 65-72 (65-72 (GPESSGKT)) interacts with ATP.

This sequence belongs to the RecA family.

Its subcellular location is the cytoplasm. In terms of biological role, can catalyze the hydrolysis of ATP in the presence of single-stranded DNA, the ATP-dependent uptake of single-stranded DNA by duplex DNA, and the ATP-dependent hybridization of homologous single-stranded DNAs. It interacts with LexA causing its activation and leading to its autocatalytic cleavage. This chain is Protein RecA, found in Enterococcus faecium (Streptococcus faecium).